A 545-amino-acid chain; its full sequence is MEFAELIKTPRVDNVVLHRPFYTAVEGTLCLTGHHLILSSRQDNTEELWLLHSNIDAIDKRFVGSLGTIIIKCKDFRIIQLDIPGMEECLNIASSIEALSTLDSVTLMYPFFYRPMFEVIEDGWHSFLPEQEFEFYSSATSEWRLSYINKDFSICPSYPPTVIVPKSVDDEALRKVAAFRHGGRFPVLSYYHKKNGMVIMRSGQPLTGTNGRRCKEDEKLINATLRAGKRGYLIDTRSLNVAQQARAKGGGFEQEAHYPQWRRIHKSIERYHVLQESLIKLVEACNEQTHNMDRWLGKLEASNWLTHIKEILTTACLAAQCIDREGASVLIHGTEGTDSTLQVTSLAQIILEPRSRTIRGFEALIEREWLQAGHPFQQRCAQSAYCSSKQKWEAPVFLLFLDCVWQILRQFPCSFEFNEHFLIMLFEHAYASQFGTFLGNNESERCKLKLQQKTMSLWSWVNRPGELSKFTNPLFEANNLVIWPSVAPQSLQLWEGIFLRWSRSSKYLDEAYEEMVNIIEYNKELQAKVNVLRRQLAELETEDGL.

Methionine 1 carries the N-acetylmethionine modification. A GRAM domain is found at 4–99 (AELIKTPRVD…LNIASSIEAL (96 aa)). Residues 123–498 (GWHSFLPEQE…QSLQLWEGIF (376 aa)) enclose the Myotubularin phosphatase domain. Residues 508-542 (LDEAYEEMVNIIEYNKELQAKVNVLRRQLAELETE) adopt a coiled-coil conformation.

The protein belongs to the protein-tyrosine phosphatase family. Non-receptor class myotubularin subfamily. In terms of assembly, homodimer. Heterodimer (via C-terminus) with lipid phosphatase MTMR6 (via C-terminus). Heterodimer (via coiled coil domain) with lipid phosphatase MTMR7 (via C-terminus).

It is found in the cytoplasm. The protein resides in the cell projection. It localises to the ruffle membrane. Its subcellular location is the perinuclear region. The protein localises to the endoplasmic reticulum. Acts as an adapter for myotubularin-related phosphatases. Increases lipid phosphatase MTMR6 catalytic activity, specifically towards phosphatidylinositol 3,5-bisphosphate, and MTMR6 binding affinity for phosphorylated phosphatidylinositols. Positively regulates lipid phosphatase MTMR7 catalytic activity. The formation of the MTMR6-MTMR9 complex, stabilizes both MTMR6 and MTMR9 protein levels. Plays a role in the late stages of macropinocytosis possibly by regulating MTMR6-mediated dephosphorylation of phosphatidylinositol 3-phosphate in membrane ruffles. Negatively regulates DNA damage-induced apoptosis, in part via its association with MTMR6. Does not bind mono-, di- and tri-phosphorylated phosphatidylinositols, phosphatidic acid and phosphatidylserine. The sequence is that of Myotubularin-related protein 9 (Mtmr9) from Mus musculus (Mouse).